We begin with the raw amino-acid sequence, 161 residues long: 2-C-methyl-D-erythritol 2,4-cyclodiphosphate synthase (161 aa).

Residues aspartate 8 and histidine 10 each contribute to the a divalent metal cation site. 4-CDP-2-C-methyl-D-erythritol 2-phosphate is bound by residues 8 to 10 (DLH) and 34 to 35 (HS). Histidine 42 is an a divalent metal cation binding site. Residues 56 to 58 (DIG), 100 to 106 (AEYPKML), and arginine 142 contribute to the 4-CDP-2-C-methyl-D-erythritol 2-phosphate site.

The protein belongs to the IspF family. As to quaternary structure, homotrimer. Requires a divalent metal cation as cofactor.

It carries out the reaction 4-CDP-2-C-methyl-D-erythritol 2-phosphate = 2-C-methyl-D-erythritol 2,4-cyclic diphosphate + CMP. The protein operates within isoprenoid biosynthesis; isopentenyl diphosphate biosynthesis via DXP pathway; isopentenyl diphosphate from 1-deoxy-D-xylulose 5-phosphate: step 4/6. Involved in the biosynthesis of isopentenyl diphosphate (IPP) and dimethylallyl diphosphate (DMAPP), two major building blocks of isoprenoid compounds. Catalyzes the conversion of 4-diphosphocytidyl-2-C-methyl-D-erythritol 2-phosphate (CDP-ME2P) to 2-C-methyl-D-erythritol 2,4-cyclodiphosphate (ME-CPP) with a corresponding release of cytidine 5-monophosphate (CMP). The sequence is that of 2-C-methyl-D-erythritol 2,4-cyclodiphosphate synthase from Buchnera aphidicola subsp. Acyrthosiphon pisum (strain 5A).